A 227-amino-acid polypeptide reads, in one-letter code: Ribosomal RNA large subunit methyltransferase E (227 aa).

Gly-78, Trp-80, Asp-103, Asp-119, and Asp-143 together coordinate S-adenosyl-L-methionine. The active-site Proton acceptor is the Lys-183.

It belongs to the class I-like SAM-binding methyltransferase superfamily. RNA methyltransferase RlmE family.

It is found in the cytoplasm. The catalysed reaction is uridine(2552) in 23S rRNA + S-adenosyl-L-methionine = 2'-O-methyluridine(2552) in 23S rRNA + S-adenosyl-L-homocysteine + H(+). Functionally, specifically methylates the uridine in position 2552 of 23S rRNA at the 2'-O position of the ribose in the fully assembled 50S ribosomal subunit. This is Ribosomal RNA large subunit methyltransferase E from Rickettsia conorii (strain ATCC VR-613 / Malish 7).